The following is a 109-amino-acid chain: Nucleoid-associated protein VV2410 (109 aa).

The interval 1-22 is disordered; sequence MFGKGGMGNLMKQAQQMQERMQ.

The protein belongs to the YbaB/EbfC family. Homodimer.

The protein resides in the cytoplasm. The protein localises to the nucleoid. Binds to DNA and alters its conformation. May be involved in regulation of gene expression, nucleoid organization and DNA protection. In Vibrio vulnificus (strain YJ016), this protein is Nucleoid-associated protein VV2410.